Here is a 380-residue protein sequence, read N- to C-terminus: Probable tRNA sulfurtransferase (380 aa).

The THUMP domain occupies 58–162 (EEVIERLKKV…MAFVYAGVIE (105 aa)). Residues 178-179 (LL), 203-204 (YF), R260, G282, and Q291 contribute to the ATP site.

It belongs to the ThiI family.

It is found in the cytoplasm. It carries out the reaction [ThiI sulfur-carrier protein]-S-sulfanyl-L-cysteine + a uridine in tRNA + 2 reduced [2Fe-2S]-[ferredoxin] + ATP + H(+) = [ThiI sulfur-carrier protein]-L-cysteine + a 4-thiouridine in tRNA + 2 oxidized [2Fe-2S]-[ferredoxin] + AMP + diphosphate. It catalyses the reaction [ThiS sulfur-carrier protein]-C-terminal Gly-Gly-AMP + S-sulfanyl-L-cysteinyl-[cysteine desulfurase] + AH2 = [ThiS sulfur-carrier protein]-C-terminal-Gly-aminoethanethioate + L-cysteinyl-[cysteine desulfurase] + A + AMP + 2 H(+). It participates in cofactor biosynthesis; thiamine diphosphate biosynthesis. Functionally, catalyzes the ATP-dependent transfer of a sulfur to tRNA to produce 4-thiouridine in position 8 of tRNAs, which functions as a near-UV photosensor. Also catalyzes the transfer of sulfur to the sulfur carrier protein ThiS, forming ThiS-thiocarboxylate. This is a step in the synthesis of thiazole, in the thiamine biosynthesis pathway. The sulfur is donated as persulfide by IscS. In Thermoanaerobacter pseudethanolicus (strain ATCC 33223 / 39E) (Clostridium thermohydrosulfuricum), this protein is Probable tRNA sulfurtransferase.